A 440-amino-acid chain; its full sequence is D-serine dehydratase (440 aa).

At Lys-116 the chain carries N6-(pyridoxal phosphate)lysine.

It belongs to the serine/threonine dehydratase family. DsdA subfamily. As to quaternary structure, monomer. It depends on pyridoxal 5'-phosphate as a cofactor.

It catalyses the reaction D-serine = pyruvate + NH4(+). This chain is D-serine dehydratase, found in Salmonella arizonae (strain ATCC BAA-731 / CDC346-86 / RSK2980).